We begin with the raw amino-acid sequence, 236 residues long: MHHEAPLYTWFGLTFNLANVLMITVTSVIVFVIAVLATRNLAMKPTGMQNFLEWVMDFVKGIIKSNMDWKTGGRFHMLGMTLIMYIFVANMLGLPFSVVIDNKLWWKSPTADPVVTLTLATMVVALSHYYGIKLNGFKEYAKGFVSPMPILFPLKIIEEFANTLTLGLRLYGNIFAGEILLALLAGSLATGVGGTIAAIIPTIAWQGFSIFVGAIQAFIFTMLTMVYMAHKVSHDH.

5 helical membrane passes run 17–37, 80–100, 114–134, 179–199, and 208–228; these read LANV…AVLA, MTLI…SVVI, VVTL…GIKL, ILLA…IAAI, and FSIF…MVYM.

The protein belongs to the ATPase A chain family. F-type ATPases have 2 components, CF(1) - the catalytic core - and CF(0) - the membrane proton channel. CF(1) has five subunits: alpha(3), beta(3), gamma(1), delta(1), epsilon(1). CF(0) has three main subunits: a(1), b(2) and c(9-12). The alpha and beta chains form an alternating ring which encloses part of the gamma chain. CF(1) is attached to CF(0) by a central stalk formed by the gamma and epsilon chains, while a peripheral stalk is formed by the delta and b chains.

It localises to the cell membrane. Key component of the proton channel; it plays a direct role in the translocation of protons across the membrane. The sequence is that of ATP synthase subunit a from Anoxybacillus flavithermus (strain DSM 21510 / WK1).